The following is a 55-amino-acid chain: Ferredoxin (55 aa).

4Fe-4S ferredoxin-type domains follow at residues 2–27 (YKIT…SESD) and 28–55 (AVRV…IVEG). Cysteine 8, cysteine 11, cysteine 14, cysteine 18, cysteine 37, cysteine 40, cysteine 43, and cysteine 47 together coordinate [4Fe-4S] cluster.

It depends on [4Fe-4S] cluster as a cofactor.

Functionally, ferredoxins are iron-sulfur proteins that transfer electrons in a wide variety of metabolic reactions. The polypeptide is Ferredoxin (Clostridium sp. (strain M-E)).